Here is a 183-residue protein sequence, read N- to C-terminus: Oleosin 5 (183 aa).

The polar stretch occupies residues 1–39 (MADVRTHSHQLQVHPQRQHEGGIKVLYPQSGPSSTQVLA). 3 consecutive transmembrane segments (helical) span residues 37–57 (VLAV…AGLT), 66–86 (MLAF…AFVI), and 87–107 (GLAM…LSSM). The interval 40 to 113 (VFVGVPIGGT…LSSMSWVLNY (74 aa)) is hydrophobic. The disordered stretch occupies residues 144-183 (KDAGQTIEDKAHDVREAKTFDVRDRDTTKGTHNVRDTKTT).

The protein belongs to the oleosin family.

It localises to the lipid droplet. The protein resides in the membrane. May have a structural role to stabilize the lipid body during desiccation of the seed by preventing coalescence of the oil. Probably interacts with both lipid and phospholipid moieties of lipid bodies. May also provide recognition signals for specific lipase anchorage in lipolysis during seedling growth. This chain is Oleosin 5, found in Arabidopsis thaliana (Mouse-ear cress).